Here is a 415-residue protein sequence, read N- to C-terminus: Transcription termination factor Rho (415 aa).

A Rho RNA-BD domain is found at 52-119; the sequence is ADIASGVLDI…TDVVRVNGRT (68 aa). ATP-binding positions include 161–166, 173–178, and Arg204; these read GKGQRG and KTGKTV.

The protein belongs to the Rho family. Homohexamer. The homohexamer assembles into an open ring structure.

Its function is as follows. Facilitates transcription termination by a mechanism that involves Rho binding to the nascent RNA, activation of Rho's RNA-dependent ATPase activity, and release of the mRNA from the DNA template. The polypeptide is Transcription termination factor Rho (Streptomyces coelicolor (strain ATCC BAA-471 / A3(2) / M145)).